A 643-amino-acid chain; its full sequence is Probable potassium transport system protein Kup (643 aa).

Over residues 1 to 12 the composition is skewed to basic and acidic residues; it reads MSISSKTEDSDI. A disordered region spans residues 1–20; it reads MSISSKTEDSDIRSSVMTDH. 12 consecutive transmembrane segments (helical) span residues 28 to 48, 65 to 85, 121 to 141, 158 to 178, 187 to 207, 224 to 244, 268 to 288, 301 to 321, 358 to 378, 384 to 404, 415 to 435, and 440 to 460; these read LAGLSLAALGVVFGDIGTSPL, AGNVLGVLSLLFWALVLIVGL, WLLVAIGLFGASLLYGDGMIT, PAFHEMVIPLTMLVLAGLFLF, GALFGPIILLWFIAIAILGII, GISFLLGNNLKGFTVLGAVFL, WFLLVLPALLLNYFGQGALLL, LVPSWAMIPMVLLATSATIIA, IYVPAANWSLMVGTIGIVAWF, LAAAYGVAVTATMLISTILFY, PAALNVMITFFAAIDLSFFGA, and LFHGAWVPLAVALVMFTIMNT.

The protein belongs to the HAK/KUP transporter (TC 2.A.72) family.

Its subcellular location is the cell inner membrane. The catalysed reaction is K(+)(in) + H(+)(in) = K(+)(out) + H(+)(out). Functionally, transport of potassium into the cell. Likely operates as a K(+):H(+) symporter. The protein is Probable potassium transport system protein Kup of Chlorobium luteolum (strain DSM 273 / BCRC 81028 / 2530) (Pelodictyon luteolum).